A 234-amino-acid chain; its full sequence is BTB/POZ domain-containing protein KCTD5 (234 aa).

The residue at position 2 (Ala2) is an N-acetylalanine. Residues 44–146 (KWVRLNVGGT…LVKDKIRERD (103 aa)) form the BTB domain. The segment at 213–234 (PYGTTSEPSEKAKILQERGSRM) is disordered. Residues 220 to 234 (PSEKAKILQERGSRM) are compositionally biased toward basic and acidic residues.

In terms of assembly, homopentamer. Interacts (via C-terminus) with GRASP55/GORASP2. Interacts with CUL3 and with ubiquitinated proteins. Interacts with CRY1.

The protein resides in the cytoplasm. It localises to the cytosol. It is found in the nucleus. In terms of biological role, its interaction with CUL3 suggests that it may act as a substrate adapter in some E3 ligase complex. Does not affect the function of Kv channel Kv2.1/KCNB1, Kv1.2/KCNA2, Kv4.2/KCND2 and Kv3.4/KCNC4. The protein is BTB/POZ domain-containing protein KCTD5 (Kctd5) of Rattus norvegicus (Rat).